We begin with the raw amino-acid sequence, 824 residues long: Phenylalanine--tRNA ligase beta subunit (824 aa).

The tRNA-binding domain maps to 39–153 (SEQAKNVVIG…NIPPIGSNAV (115 aa)). In terms of domain architecture, B5 spans 414–507 (KKSISVNLRM…RLIGYDNFDS (94 aa)). Positions 485, 491, 494, and 495 each coordinate Mg(2+). In terms of domain architecture, FDX-ACB spans 730-823 (PTVPYMERDI…LKEKIKAELR (94 aa)).

Belongs to the phenylalanyl-tRNA synthetase beta subunit family. Type 1 subfamily. As to quaternary structure, tetramer of two alpha and two beta subunits. The cofactor is Mg(2+).

It is found in the cytoplasm. The catalysed reaction is tRNA(Phe) + L-phenylalanine + ATP = L-phenylalanyl-tRNA(Phe) + AMP + diphosphate + H(+). This Prochlorococcus marinus (strain NATL2A) protein is Phenylalanine--tRNA ligase beta subunit.